Here is a 1011-residue protein sequence, read N- to C-terminus: Vacuolar membrane protease (1011 aa).

Residues 1 to 9 lie on the Cytoplasmic side of the membrane; sequence MSNPFAFRS. A helical membrane pass occupies residues 10 to 30; that stretch reads AQVTFWTTVVYLALLVPLVVI. Over 31–378 the chain is Vacuolar; the sequence is NEGVPPVQPD…TFVLFGLRGM (348 aa). 2 N-linked (GlcNAc...) asparagine glycosylation sites follow: Asn-50 and Asn-106. 2 residues coordinate Zn(2+): His-159 and Asp-171. Residue Glu-205 is the Proton acceptor of the active site. The Zn(2+) site is built by Glu-206, Glu-231, and His-304. Asn-331 is a glycosylation site (N-linked (GlcNAc...) asparagine). A helical transmembrane segment spans residues 379–399; it reads FAWSLTVLIVGPLTLFGMMYL. Residues 400–439 lie on the Cytoplasmic side of the membrane; it reads VHKQGKGYAFHTKLRATSDSSSEDGDDEDGEVIRLGGWKG. A helical membrane pass occupies residues 440–460; that stretch reads FFRFPFALIVAGALVTGAALL. Residues 461–471 lie on the Vacuolar side of the membrane; it reads LRKMNPFIIYS. A helical membrane pass occupies residues 472 to 492; that stretch reads SEYAVWAMMISLFYFGFWLIM. Over 493-505 the chain is Cytoplasmic; sequence RGSSYTRPSALHR. A helical membrane pass occupies residues 506–526; sequence LYVHIWLFILGWVALVFATVL. Residues 527–536 are Vacuolar-facing; sequence EDRMRIASGY. Residues 537–557 form a helical membrane-spanning segment; it reads IFVFWESQVFLATLVAVCELF. The Cytoplasmic segment spans residues 558–682; that stretch reads SLPRKIDFAR…WSGPMVTSTW (125 aa). The segment covering 595-609 has biased composition (polar residues); sequence EATSPQRAGQSSNSP. 2 disordered regions span residues 595-627 and 650-671; these read EATSPQRAGQSSNSPQEDDEDDVPDEETPLFRK and IMDSNNEAEDGPKRKQPFEGEQ. Positions 610-622 are enriched in acidic residues; sequence QEDDEDDVPDEET. A helical transmembrane segment spans residues 683 to 703; that stretch reads ILQFLLLGPFMVILGGQVGLL. Topologically, residues 704–719 are vacuolar; that stretch reads LTSAVNQTGVDGSSLL. An N-linked (GlcNAc...) asparagine glycan is attached at Asn-709. A helical transmembrane segment spans residues 720 to 740; it reads APYLMIAALSAILLMPLSPFI. Residues 741-747 lie on the Cytoplasmic side of the membrane; sequence HRVTKHV. A helical membrane pass occupies residues 748–768; sequence PLFLLAVAFATLIYSLVAFPF. Residues 769–1011 are Vacuolar-facing; sequence SPRAPYKTFF…LVEGSKAFKV (243 aa). Residue Asn-872 is glycosylated (N-linked (GlcNAc...) asparagine).

The protein belongs to the peptidase M28 family. Zn(2+) serves as cofactor.

It is found in the vacuole membrane. Functionally, may be involved in vacuolar sorting and osmoregulation. This Pyricularia oryzae (strain 70-15 / ATCC MYA-4617 / FGSC 8958) (Rice blast fungus) protein is Vacuolar membrane protease.